The following is a 192-amino-acid chain: Protein GrpE (192 aa).

The segment at 1–43 is disordered; the sequence is MQENKQPSEIQGELPQPPDGESVPPQPTNEQAPPDTDTMPRIE.

This sequence belongs to the GrpE family. In terms of assembly, homodimer.

The protein localises to the cytoplasm. In terms of biological role, participates actively in the response to hyperosmotic and heat shock by preventing the aggregation of stress-denatured proteins, in association with DnaK and GrpE. It is the nucleotide exchange factor for DnaK and may function as a thermosensor. Unfolded proteins bind initially to DnaJ; upon interaction with the DnaJ-bound protein, DnaK hydrolyzes its bound ATP, resulting in the formation of a stable complex. GrpE releases ADP from DnaK; ATP binding to DnaK triggers the release of the substrate protein, thus completing the reaction cycle. Several rounds of ATP-dependent interactions between DnaJ, DnaK and GrpE are required for fully efficient folding. This is Protein GrpE from Aromatoleum aromaticum (strain DSM 19018 / LMG 30748 / EbN1) (Azoarcus sp. (strain EbN1)).